Reading from the N-terminus, the 229-residue chain is Prolactin (229 aa).

The first 30 residues, Met1–Ser30, serve as a signal peptide directing secretion. An intrachain disulfide couples Cys34 to Cys41. Position 56 is a phosphoserine (Ser56). Asn61 carries an N-linked (GlcNAc...) asparagine; partial glycan. Ser64 and Ser120 each carry phosphoserine. 2 disulfide bridges follow: Cys88/Cys204 and Cys221/Cys229.

Belongs to the somatotropin/prolactin family. Interacts with PRLR.

It localises to the secreted. Prolactin acts primarily on the mammary gland by promoting lactation. This Equus caballus (Horse) protein is Prolactin (PRL).